Here is a 339-residue protein sequence, read N- to C-terminus: Phenylalanine--tRNA ligase alpha subunit (339 aa).

Glutamate 254 lines the Mg(2+) pocket.

Belongs to the class-II aminoacyl-tRNA synthetase family. Phe-tRNA synthetase alpha subunit type 1 subfamily. As to quaternary structure, tetramer of two alpha and two beta subunits. Mg(2+) serves as cofactor.

The protein localises to the cytoplasm. It catalyses the reaction tRNA(Phe) + L-phenylalanine + ATP = L-phenylalanyl-tRNA(Phe) + AMP + diphosphate + H(+). This chain is Phenylalanine--tRNA ligase alpha subunit, found in Acetivibrio thermocellus (strain ATCC 27405 / DSM 1237 / JCM 9322 / NBRC 103400 / NCIMB 10682 / NRRL B-4536 / VPI 7372) (Clostridium thermocellum).